The chain runs to 536 residues: Peptide chain release factor 3 (536 aa).

In terms of domain architecture, tr-type G spans 13-281; sequence SHRRTFAIIS…ALIDWAPAPQ (269 aa). Residues 22–29, 90–94, and 144–147 each bind GTP; these read SHPDAGKT, DTPGH, and NKCD.

The protein belongs to the TRAFAC class translation factor GTPase superfamily. Classic translation factor GTPase family. PrfC subfamily.

The protein localises to the cytoplasm. Its function is as follows. Increases the formation of ribosomal termination complexes and stimulates activities of RF-1 and RF-2. It binds guanine nucleotides and has strong preference for UGA stop codons. It may interact directly with the ribosome. The stimulation of RF-1 and RF-2 is significantly reduced by GTP and GDP, but not by GMP. The sequence is that of Peptide chain release factor 3 from Chromobacterium violaceum (strain ATCC 12472 / DSM 30191 / JCM 1249 / CCUG 213 / NBRC 12614 / NCIMB 9131 / NCTC 9757 / MK).